The following is a 165-amino-acid chain: ATP synthase subunit b (165 aa).

Residues 5–27 (INSTTLGNIIITLGSVFLLYYLI) traverse the membrane as a helical segment.

It belongs to the ATPase B chain family. In terms of assembly, F-type ATPases have 2 components, F(1) - the catalytic core - and F(0) - the membrane proton channel. F(1) has five subunits: alpha(3), beta(3), gamma(1), delta(1), epsilon(1). F(0) has three main subunits: a(1), b(2) and c(10-14). The alpha and beta chains form an alternating ring which encloses part of the gamma chain. F(1) is attached to F(0) by a central stalk formed by the gamma and epsilon chains, while a peripheral stalk is formed by the delta and b chains.

The protein resides in the cell membrane. In terms of biological role, f(1)F(0) ATP synthase produces ATP from ADP in the presence of a proton or sodium gradient. F-type ATPases consist of two structural domains, F(1) containing the extramembraneous catalytic core and F(0) containing the membrane proton channel, linked together by a central stalk and a peripheral stalk. During catalysis, ATP synthesis in the catalytic domain of F(1) is coupled via a rotary mechanism of the central stalk subunits to proton translocation. Its function is as follows. Component of the F(0) channel, it forms part of the peripheral stalk, linking F(1) to F(0). The polypeptide is ATP synthase subunit b (Streptococcus thermophilus (strain CNRZ 1066)).